Reading from the N-terminus, the 262-residue chain is Carbonic anhydrase 13 (262 aa).

The region spanning 4–261 is the Alpha-carbonic anhydrase domain; sequence LSWGYREHNG…LKGRKVRASF (258 aa). The active-site Proton donor/acceptor is His65. 3 residues coordinate Zn(2+): His95, His97, and His120. 200 to 201 contributes to the substrate binding site; that stretch reads TV.

This sequence belongs to the alpha-carbonic anhydrase family. Zn(2+) is required as a cofactor. Expressed in thymus, small intestine, spleen, prostate, ovary, colon and testis.

The enzyme catalyses hydrogencarbonate + H(+) = CO2 + H2O. Its activity is regulated as follows. Inhibited by acetazolamide. Its function is as follows. Reversible hydration of carbon dioxide. In Homo sapiens (Human), this protein is Carbonic anhydrase 13 (CA13).